The following is a 473-amino-acid chain: Protein TED1 (473 aa).

Topologically, residues 1 to 8 (MLRCAVKK) are cytoplasmic. The helical transmembrane segment at 9–29 (FAYFATFLTIVANIYIYTYPS) threads the bilayer. Over 30 to 451 (FHPEQCSWNC…FSLCPFAIQH (422 aa)) the chain is Lumenal. 5 N-linked (GlcNAc...) asparagine glycosylation sites follow: Asn-38, Asn-147, Asn-229, Asn-266, and Asn-307. The helical transmembrane segment at 452-472 (VWWFAKVSLLVTIFTWSSLLF) threads the bilayer. Position 473 (Val-473) is a topological domain, cytoplasmic.

In terms of processing, N-glycosylated.

The protein resides in the endoplasmic reticulum membrane. Acts together with EMP24 and ERV25 in cargo exit from the endoplasmic reticulum. This is Protein TED1 (TED1) from Saccharomyces cerevisiae (strain ATCC 204508 / S288c) (Baker's yeast).